The primary structure comprises 190 residues: MHKLIAGVDEVGRGPLVGDVVTAAVILDPQNPIEGLTDSKKLSEKKRVALAQEIREKALYWNIGRASPEEIDKLNILHATMLAMIRAVEGLPVKPDFVRVDGNRLPAWNFDSEAVVKGDSLHAEISAASIIAKVERDNDMISLHEAFPQYNFAGHKGYPTKAHFEAIAEYGILDCYRKSFKPVKALLEEK.

The RNase H type-2 domain occupies 3 to 190; it reads KLIAGVDEVG…KPVKALLEEK (188 aa). Asp9, Glu10, and Asp101 together coordinate a divalent metal cation.

The protein belongs to the RNase HII family. Requires Mn(2+) as cofactor. It depends on Mg(2+) as a cofactor.

Its subcellular location is the cytoplasm. It carries out the reaction Endonucleolytic cleavage to 5'-phosphomonoester.. Its function is as follows. Endonuclease that specifically degrades the RNA of RNA-DNA hybrids. The protein is Ribonuclease HII of Alteromonas mediterranea (strain DSM 17117 / CIP 110805 / LMG 28347 / Deep ecotype).